We begin with the raw amino-acid sequence, 267 residues long: uncharacterized protein (267 aa).

The ABC transporter domain occupies 17–248 (LKVENLTKIF…PRDRTSIEFL (232 aa)). 53 to 60 (GPSGCGKT) contributes to the ATP binding site.

Belongs to the ABC transporter superfamily.

This is an uncharacterized protein from Methanocaldococcus jannaschii (strain ATCC 43067 / DSM 2661 / JAL-1 / JCM 10045 / NBRC 100440) (Methanococcus jannaschii).